Here is a 348-residue protein sequence, read N- to C-terminus: Ferredoxin--NADP reductase (348 aa).

FAD contacts are provided by threonine 26, glutamate 45, glutamine 53, tyrosine 58, alanine 98, phenylalanine 133, aspartate 299, and serine 340.

It belongs to the ferredoxin--NADP reductase type 2 family. As to quaternary structure, homodimer. FAD is required as a cofactor.

The enzyme catalyses 2 reduced [2Fe-2S]-[ferredoxin] + NADP(+) + H(+) = 2 oxidized [2Fe-2S]-[ferredoxin] + NADPH. This chain is Ferredoxin--NADP reductase, found in Prosthecochloris aestuarii (strain DSM 271 / SK 413).